Reading from the N-terminus, the 158-residue chain is Endoribonuclease YbeY (158 aa).

Residues His-121, His-125, and His-131 each contribute to the Zn(2+) site.

The protein belongs to the endoribonuclease YbeY family. Requires Zn(2+) as cofactor.

The protein localises to the cytoplasm. In terms of biological role, single strand-specific metallo-endoribonuclease involved in late-stage 70S ribosome quality control and in maturation of the 3' terminus of the 16S rRNA. This is Endoribonuclease YbeY from Exiguobacterium sibiricum (strain DSM 17290 / CCUG 55495 / CIP 109462 / JCM 13490 / 255-15).